The primary structure comprises 389 residues: Alcohol dehydrogenase-like 5 (389 aa).

Zn(2+) is bound by residues cysteine 54, threonine 56, histidine 77, cysteine 107, cysteine 110, cysteine 113, cysteine 121, and cysteine 186. Positions 56 and 77 each coordinate an alcohol. Threonine 56 serves as a coordination point for NAD(+). NAD(+)-binding positions include 211–216 (GLGAVG), aspartate 235, lysine 240, 305–307 (LGI), phenylalanine 332, and arginine 382.

The protein belongs to the zinc-containing alcohol dehydrogenase family. Class-III subfamily. As to quaternary structure, homodimer. Zn(2+) serves as cofactor.

It localises to the cytoplasm. It carries out the reaction a primary alcohol + NAD(+) = an aldehyde + NADH + H(+). The catalysed reaction is a secondary alcohol + NAD(+) = a ketone + NADH + H(+). In Arabidopsis thaliana (Mouse-ear cress), this protein is Alcohol dehydrogenase-like 5.